A 156-amino-acid chain; its full sequence is Small ribosomal subunit protein uS7 (156 aa).

Belongs to the universal ribosomal protein uS7 family. Part of the 30S ribosomal subunit. Contacts proteins S9 and S11.

Its function is as follows. One of the primary rRNA binding proteins, it binds directly to 16S rRNA where it nucleates assembly of the head domain of the 30S subunit. Is located at the subunit interface close to the decoding center, probably blocks exit of the E-site tRNA. This is Small ribosomal subunit protein uS7 from Dictyoglomus thermophilum (strain ATCC 35947 / DSM 3960 / H-6-12).